The chain runs to 247 residues: Chymase (247 aa).

The first 19 residues, 1–19 (MNLHALCLLLLLLGSSTKA), serve as a signal peptide directing secretion. The propeptide at 20–21 (GE) is activation peptide. A Peptidase S1 domain is found at 22–245 (IIGGTECIPH…YRPWINKILR (224 aa)). Cys51 and Cys67 form a disulfide bridge. His66 serves as the catalytic Charge relay system. Asn80 is a glycosylation site (N-linked (GlcNAc...) asparagine). Asp110 functions as the Charge relay system in the catalytic mechanism. 2 cysteine pairs are disulfide-bonded: Cys144-Cys209 and Cys175-Cys188. The active-site Charge relay system is the Ser203.

The protein belongs to the peptidase S1 family. Granzyme subfamily. As to expression, mast cells.

It localises to the secreted. It is found in the cytoplasmic granule. It carries out the reaction Preferential cleavage: Phe-|-Xaa &gt; Tyr-|-Xaa &gt; Trp-|-Xaa &gt; Leu-|-Xaa.. Major secreted protease of mast cells with suspected roles in vasoactive peptide generation, extracellular matrix degradation, and regulation of gland secretion. The chain is Chymase (Cma1) from Rattus norvegicus (Rat).